Reading from the N-terminus, the 453-residue chain is MYINPKEILETIQMVRMEHLDIRTVTMGISLRDCSHPDIEVFNENIYEKITTRAKELVRTTNEIQSLYGIPIINKRISVTPIAVAAESCRAPDFVSIAKTMDEAAKDAQVDFIGGFSALVHKGATVGDLKLINSIPEALKSTEKVCSSINVATTKTGINMDAVGLMGSIIKKTADLTADRDGIGCAKLVVFANAPEDNPFMAGAFHGIGEPECVINVGVSGPGVVNAAIRELENPNLTEISETIKKTAFKITRMGEMVGREVSRRLGVEFGILDLSLAPTPAIGDSVAAILEAMGLERCGAHGTTAALALLNDAVKKGGAMASSSVGGLSGAFIPVSEDAGMIEAVRAGALNLEKLEAMTSVCSVGLDMIAVPGDTPASTLSAIIADEMAIGVINRKTTAVRVIPAPGKRVGDSVEFGGLLGNAPIMPLSNFSSETFVKRGGRIPAPIQSLTN.

Belongs to the UPF0210 family.

This is UPF0210 protein Mbar_A3181 from Methanosarcina barkeri (strain Fusaro / DSM 804).